Here is a 215-residue protein sequence, read N- to C-terminus: Cytochrome b6 (215 aa).

A helical transmembrane segment spans residues 32–52 (IFYCLGGITLTCFLVQVATGF). C35 serves as a coordination point for heme c. H86 and H100 together coordinate heme b. 3 consecutive transmembrane segments (helical) span residues 90–110 (ASMM…TGGF), 116–136 (LTWV…VTGY), and 186–206 (LHTF…FLMI). H187 and H202 together coordinate heme b.

It belongs to the cytochrome b family. PetB subfamily. In terms of assembly, the 4 large subunits of the cytochrome b6-f complex are cytochrome b6, subunit IV (17 kDa polypeptide, PetD), cytochrome f and the Rieske protein, while the 4 small subunits are PetG, PetL, PetM and PetN. The complex functions as a dimer. Heme b serves as cofactor. Requires heme c as cofactor.

Its subcellular location is the plastid. It localises to the chloroplast thylakoid membrane. Its function is as follows. Component of the cytochrome b6-f complex, which mediates electron transfer between photosystem II (PSII) and photosystem I (PSI), cyclic electron flow around PSI, and state transitions. The chain is Cytochrome b6 from Pinus koraiensis (Korean pine).